Consider the following 507-residue polypeptide: MITLTPGHLTLPQLRQIARESVQLKLDPASFAKIDAGAKAVADIAAKGEPAYGINTGFGRLASTHIPHDQLELLQKNLVLSHAVGVGEPMARSSVRLLMALKLSSLGRGHSGIRREVMDALITLFNADVLPLIPVKGSVGASGDLAPLAHMSAVLLGVGEVFIRGERASALDGLRVAGLAPLTLQAKEGLALLNGTQASTALALDNMFAIEDLYRTALVAGALSVDAAAGSVKPFDARIHELRGHQGQIDAAASYRELLEGSPINQSHRDCDKVQDPYSLRCQPQVMGACLDQMRHAADVLLVEANAVSDNPLIFPDTGEVLSGGNFHAEPVAFAADNLALAASEIGALAERRIALLIDATLSGLPPFLVKDGGVNSGFMIAHVTAAALASENKTLAHPASVDSLPTSANQEDHVSMATFAARKLADIADNTKHILAIELLAAAQGVDLRAPYHTSPKLAPVMETIRSQVAHYELDHYFAPDIAVIAKLVGERAFAKVAPFSFASEQ.

A cross-link (5-imidazolinone (Ala-Gly)) is located at residues 141 to 143 (ASG). Ser142 carries the post-translational modification 2,3-didehydroalanine (Ser).

The protein belongs to the PAL/histidase family. In terms of processing, contains an active site 4-methylidene-imidazol-5-one (MIO), which is formed autocatalytically by cyclization and dehydration of residues Ala-Ser-Gly.

It is found in the cytoplasm. It catalyses the reaction L-histidine = trans-urocanate + NH4(+). It participates in amino-acid degradation; L-histidine degradation into L-glutamate; N-formimidoyl-L-glutamate from L-histidine: step 1/3. The sequence is that of Histidine ammonia-lyase from Burkholderia cenocepacia (strain ATCC BAA-245 / DSM 16553 / LMG 16656 / NCTC 13227 / J2315 / CF5610) (Burkholderia cepacia (strain J2315)).